A 338-amino-acid chain; its full sequence is Lipoate-protein ligase A (338 aa).

One can recognise a BPL/LPL catalytic domain in the interval 29-216 (PATQRVLFLW…AFFAHYGERV (188 aa)). Residues R71, 76–79 (GAVF), and K134 contribute to the ATP site. K134 contacts (R)-lipoate.

This sequence belongs to the LplA family. In terms of assembly, monomer.

It is found in the cytoplasm. The catalysed reaction is L-lysyl-[lipoyl-carrier protein] + (R)-lipoate + ATP = N(6)-[(R)-lipoyl]-L-lysyl-[lipoyl-carrier protein] + AMP + diphosphate + H(+). It participates in protein modification; protein lipoylation via exogenous pathway; protein N(6)-(lipoyl)lysine from lipoate: step 1/2. It functions in the pathway protein modification; protein lipoylation via exogenous pathway; protein N(6)-(lipoyl)lysine from lipoate: step 2/2. Catalyzes both the ATP-dependent activation of exogenously supplied lipoate to lipoyl-AMP and the transfer of the activated lipoyl onto the lipoyl domains of lipoate-dependent enzymes. This Escherichia coli O139:H28 (strain E24377A / ETEC) protein is Lipoate-protein ligase A.